The chain runs to 214 residues: tRNA (guanine-N(7)-)-methyltransferase (214 aa).

Glu44, Glu69, Asp96, and Asp118 together coordinate S-adenosyl-L-methionine. Residue Asp118 is part of the active site. Residues Lys122, Asp154, and 191-194 (TEYE) each bind substrate.

It belongs to the class I-like SAM-binding methyltransferase superfamily. TrmB family.

The enzyme catalyses guanosine(46) in tRNA + S-adenosyl-L-methionine = N(7)-methylguanosine(46) in tRNA + S-adenosyl-L-homocysteine. It functions in the pathway tRNA modification; N(7)-methylguanine-tRNA biosynthesis. Functionally, catalyzes the formation of N(7)-methylguanine at position 46 (m7G46) in tRNA. The chain is tRNA (guanine-N(7)-)-methyltransferase from Listeria innocua serovar 6a (strain ATCC BAA-680 / CLIP 11262).